Reading from the N-terminus, the 278-residue chain is uncharacterized protein (278 aa).

Positions 1–16 are enriched in basic and acidic residues; it reads MFGLKVKDAQKDDQKS. Disordered stretches follow at residues 1 to 86 and 98 to 126; these read MFGL…RGSN and FGTT…TPWL. Composition is skewed to low complexity over residues 33 to 45 and 99 to 117; these read QGTS…RGSS and GTTS…STPS.

It belongs to the adhesin P1 family.

This is an uncharacterized protein from Mycoplasma pneumoniae (strain ATCC 29342 / M129 / Subtype 1) (Mycoplasmoides pneumoniae).